Consider the following 691-residue polypeptide: Elongation factor G (691 aa).

In terms of domain architecture, tr-type G spans 8–282 (EKTRNIGIMA…AVVDYLPSPV (275 aa)). GTP is bound by residues 17–24 (AHIDAGKT), 81–85 (DTPGH), and 135–138 (NKMD).

It belongs to the TRAFAC class translation factor GTPase superfamily. Classic translation factor GTPase family. EF-G/EF-2 subfamily.

It localises to the cytoplasm. Catalyzes the GTP-dependent ribosomal translocation step during translation elongation. During this step, the ribosome changes from the pre-translocational (PRE) to the post-translocational (POST) state as the newly formed A-site-bound peptidyl-tRNA and P-site-bound deacylated tRNA move to the P and E sites, respectively. Catalyzes the coordinated movement of the two tRNA molecules, the mRNA and conformational changes in the ribosome. This chain is Elongation factor G, found in Caldicellulosiruptor bescii (strain ATCC BAA-1888 / DSM 6725 / KCTC 15123 / Z-1320) (Anaerocellum thermophilum).